The sequence spans 354 residues: uncharacterized protein (354 aa).

A helical transmembrane segment spans residues 43 to 63 (LIAVTLWSCVGSLLFICLLAV).

Its subcellular location is the cell membrane. This is an uncharacterized protein from Bacillus subtilis (strain 168).